A 130-amino-acid chain; its full sequence is Small ribosomal subunit protein uS11c (130 aa).

The protein belongs to the universal ribosomal protein uS11 family. As to quaternary structure, part of the 30S ribosomal subunit.

It is found in the plastid. It localises to the chloroplast. The chain is Small ribosomal subunit protein uS11c from Chaetosphaeridium globosum (Charophycean green alga).